The chain runs to 491 residues: [Pyruvate dehydrogenase (acetyl-transferring)] kinase 2, mitochondrial (491 aa).

Residues 153 to 480 form the Histidine kinase domain; that stretch reads PTIRTLEDAS…DVVLKLGNLM (328 aa). ATP is bound by residues 300–307, aspartate 341, 359–360, and 383–446; these read EILRNTYE, SK, and DEVH…GIGL.

Belongs to the PDK/BCKDK protein kinase family. As to quaternary structure, interacts with PKP1.

It localises to the mitochondrion matrix. It catalyses the reaction L-seryl-[pyruvate dehydrogenase E1 alpha subunit] + ATP = O-phospho-L-seryl-[pyruvate dehydrogenase E1 alpha subunit] + ADP + H(+). Functionally, inhibits the mitochondrial pyruvate dehydrogenase complex by phosphorylation of the E1 alpha subunit (PDA1), thus contributing to the regulation of glucose metabolism. The protein is [Pyruvate dehydrogenase (acetyl-transferring)] kinase 2, mitochondrial of Saccharomyces cerevisiae (strain ATCC 204508 / S288c) (Baker's yeast).